The chain runs to 151 residues: 3-hydroxyacyl-[acyl-carrier-protein] dehydratase FabZ (151 aa).

Residue H54 is part of the active site.

The protein belongs to the thioester dehydratase family. FabZ subfamily.

The protein localises to the cytoplasm. The catalysed reaction is a (3R)-hydroxyacyl-[ACP] = a (2E)-enoyl-[ACP] + H2O. In terms of biological role, involved in unsaturated fatty acids biosynthesis. Catalyzes the dehydration of short chain beta-hydroxyacyl-ACPs and long chain saturated and unsaturated beta-hydroxyacyl-ACPs. This chain is 3-hydroxyacyl-[acyl-carrier-protein] dehydratase FabZ, found in Pectobacterium atrosepticum (strain SCRI 1043 / ATCC BAA-672) (Erwinia carotovora subsp. atroseptica).